We begin with the raw amino-acid sequence, 1077 residues long: Histone deacetylase 4 (1077 aa).

Residues 66–169 (REQQLQQELL…GKESAVASTE (104 aa)) adopt a coiled-coil conformation. An interaction with MEF2A region spans residues 117–312 (MLAMKHQQEL…NSSSGNVSTE (196 aa)). Basic and acidic residues predominate over residues 132–162 (KLERHRQEQELEKQHREQKLQQLKNKEKGKE). 3 disordered regions span residues 132–167 (KLER…AVAS), 204–225 (KTQH…ASYN), and 239–327 (PLRK…AETS). The span at 205–224 (TQHSSLDQSSPPQSGVSASY) shows a compositional bias: polar residues. Ser209 carries the phosphoserine modification. Ser245 carries the phosphoserine; by CaMK4 and SIK1 modification. The span at 258–273 (KVAERRSSPLLRRKDG) shows a compositional bias: basic and acidic residues. A compositionally biased stretch (low complexity) spans 289–310 (SACSSAPGSGPSSPNSSSGNVS). Positions 348–353 (PSLPNI) match the PxLPxI/L motif; mediates interaction with ANKRA2 and 14-3-3 proteins motif. Ser349 carries the phosphoserine modification. Position 466 is a phosphoserine; by CaMK4 and SIK1 (Ser466). Disordered regions lie at residues 508 to 530 (SKPS…ELRE), 542 to 582 (RLPG…RPAT), and 623 to 646 (RPLS…EPPT). A compositionally biased stretch (basic and acidic residues) spans 515–530 (RQPESHPEETEEELRE). Lys557 participates in a covalent cross-link: Glycyl lysine isopeptide (Lys-Gly) (interchain with G-Cter in SUMO). Phosphoserine is present on residues Ser563, Ser630, and Ser631. Polar residues predominate over residues 627 to 639 (RAQSSPASATFPM). The tract at residues 653–1077 (GLVYDTLMLK…EEPMEEEPPL (425 aa)) is histone deacetylase. Zn(2+) contacts are provided by Cys665, Cys667, His673, and Cys744. The active site involves His796. Positions 1044–1077 (EEAETVTAMASLSVGVKPAEKRSEEEPMEEEPPL) match the Nuclear export signal motif. The tract at residues 1052–1077 (MASLSVGVKPAEKRSEEEPMEEEPPL) is disordered.

Belongs to the histone deacetylase family. HD type 2 subfamily. As to quaternary structure, homodimer. Homodimerization via its N-terminal domain. Interacts with HDAC7. Interacts with MEF2A, MEF2C, MEF2D, MORC2 and NR2C1. Interacts with a 14-3-3 chaperone proteins in a phosphorylation dependent manner. Interacts with 14-3-3 protein YWHAB. Interacts with KDM5B and AHRR. Interacts with BTBD14B. Interacts with MYOCD. Interacts (via PxLPxI/L motif) with ANKRA2 (via ankyrin repeats). Interacts with CUL7 (as part of the 3M complex); negatively regulated by ANKRA2. Interacts with EP300 in the presence of TFAP2C. Interacts with HSPA1A and HSPA1B leading to their deacetylation at 'Lys-77'. Interacts with ZBTB7B; the interaction allows the recruitment of HDAC4 on CD8 loci for deacetylation and possible inhibition of CD8 genes expression. Interacts with DHX36. Interacts with SIK3; this interaction leads to HDAC4 retention in the cytoplasm. Post-translationally, phosphorylated by CaMK4 at Ser-245, Ser-466 and Ser-630. Phosphorylation at other residues by CaMK2D is required for the interaction with 14-3-3. Phosphorylation at Ser-349, within the PxLPxI/L motif, impairs the binding of ANKRA2 but generates a high-affinity docking site for 14-3-3. In terms of processing, sumoylation on Lys-557 is promoted by the E3 SUMO-protein ligase RANBP2, and prevented by phosphorylation by CaMK4.

It is found in the nucleus. It localises to the cytoplasm. The enzyme catalyses N(6)-acetyl-L-lysyl-[histone] + H2O = L-lysyl-[histone] + acetate. In terms of biological role, responsible for the deacetylation of lysine residues on the N-terminal part of the core histones (H2A, H2B, H3 and H4). Histone deacetylation gives a tag for epigenetic repression and plays an important role in transcriptional regulation, cell cycle progression and developmental events. Histone deacetylases act via the formation of large multiprotein complexes. Involved in muscle maturation via its interaction with the myocyte enhancer factors such as MEF2A, MEF2C and MEF2D. Deacetylates HSPA1A and HSPA1B at 'Lys-77' leading to their preferential binding to co-chaperone STUB1. This Rattus norvegicus (Rat) protein is Histone deacetylase 4 (Hdac4).